The primary structure comprises 1381 residues: Hepatocyte growth factor receptor (1381 aa).

The first 24 residues, 1-24, serve as a signal peptide directing secretion; it reads MKAPAVLTPGILLLLFTLVQKSNG. The Extracellular portion of the chain corresponds to 25–932; the sequence is ECKEALTKSE…VIVQPDQNFT (908 aa). Residues 27–515 form the Sema domain; that stretch reads KEALTKSEMN…TGKKITKIPL (489 aa). Asparagine 45 carries an N-linked (GlcNAc...) asparagine glycan. Cystine bridges form between cysteine 95–cysteine 101, cysteine 98–cysteine 160, cysteine 133–cysteine 141, and cysteine 172–cysteine 175. Residue asparagine 106 is glycosylated (N-linked (GlcNAc...) asparagine). An N-linked (GlcNAc...) asparagine glycan is attached at asparagine 149. N-linked (GlcNAc...) asparagine glycosylation occurs at asparagine 202. Disulfide bonds link cysteine 298-cysteine 363 and cysteine 385-cysteine 397. N-linked (GlcNAc...) asparagine glycosylation occurs at asparagine 399. Cystine bridges form between cysteine 520-cysteine 538, cysteine 526-cysteine 561, cysteine 529-cysteine 545, and cysteine 541-cysteine 551. IPT/TIG domains are found at residues 563–655, 657–739, and 742–836; these read PTIY…FSYV, PIIT…FSYR, and PIVY…LIYV. Threonine 582 is a glycosylation site (O-linked (Man) threonine). 2 N-linked (GlcNAc...) asparagine glycosylation sites follow: asparagine 607 and asparagine 635. 2 O-linked (Man) threonine glycosylation sites follow: threonine 676 and threonine 761. N-linked (GlcNAc...) asparagine glycosylation is found at asparagine 785, asparagine 879, and asparagine 930. A helical transmembrane segment spans residues 933-955; that stretch reads GLIAGVVSISIALLLLLGLFLWL. At 956–1381 the chain is on the cytoplasmic side; the sequence is KKRKQIKDLG…QDNADGELDT (426 aa). Serine 966 is modified (phosphoserine). Threonine 977 is modified (phosphothreonine). 3 positions are modified to phosphoserine: serine 990, serine 997, and serine 1000. Position 1003 is a phosphotyrosine (tyrosine 1003). The region spanning 1078-1345 is the Protein kinase domain; that stretch reads VHFNEVIGRG…RISAIFSTFI (268 aa). ATP contacts are provided by residues 1084-1092 and lysine 1110; that span reads IGRGHFGCV. Aspartate 1204 (proton acceptor) is an active-site residue. Positions 1212 to 1381 are interaction with RANBP9; sequence LDEKFTVKVA…QDNADGELDT (170 aa). Position 1230 is a phosphotyrosine (tyrosine 1230). Tyrosine 1234 and tyrosine 1235 each carry phosphotyrosine; by autocatalysis. Threonine 1289 carries the post-translational modification Phosphothreonine. Residues 1320–1359 are interaction with MUC20; sequence WHPKAEMRPSFSELVSRISAIFSTFIGEHYVHVNATYVNV. 2 positions are modified to phosphotyrosine; by autocatalysis: tyrosine 1349 and tyrosine 1356. Tyrosine 1365 carries the phosphotyrosine modification.

This sequence belongs to the protein kinase superfamily. Tyr protein kinase family. In terms of assembly, heterodimer made of an alpha chain (50 kDa) and a beta chain (145 kDa) which are disulfide linked. Binds PLXNB1. Interacts when phosphorylated with downstream effectors including STAT3, PIK3R1, SRC, PCLG1, GRB2 and GAB1. Interacts with SPSB1, SPSB2 and SPSB4. Interacts with INPP5D/SHIP1. When phosphorylated at Tyr-1356, interacts with INPPL1/SHIP2. Interacts with RANBP9 and RANBP10, as well as SPSB1, SPSB2, SPSB3 and SPSB4. SPSB1 binding occurs in the presence and in the absence of HGF, however HGF treatment has a positive effect on this interaction. Interacts with MUC20; prevents interaction with GRB2 and suppresses hepatocyte growth factor-induced cell proliferation. Interacts with GRB10. Interacts with PTPN1 and PTPN2. Interacts with HSP90AA1 and HSP90AB1; the interaction suppresses MET kinase activity. Interacts with tensin TNS3. Interacts (when phosphorylated) with tensin TNS4 (via SH2 domain); the interaction increases MET protein stability by inhibiting MET endocytosis and subsequent lysosomal degradation. In terms of processing, autophosphorylated in response to ligand binding on Tyr-1234 and Tyr-1235 in the kinase domain leading to further phosphorylation of Tyr-1349 and Tyr-1356 in the C-terminal multifunctional docking site. Dephosphorylated by PTPRJ at Tyr-1349 and Tyr-1365. Dephosphorylated by PTPN1 and PTPN2. Ubiquitinated. Ubiquitination by CBL regulates the receptor stability and activity through proteasomal degradation. Post-translationally, O-mannosylation of IPT/TIG domains by TMEM260 is required for protein maturation. O-mannosylated residues are composed of single mannose glycans that are not elongated or modified.

The protein resides in the membrane. The catalysed reaction is L-tyrosyl-[protein] + ATP = O-phospho-L-tyrosyl-[protein] + ADP + H(+). Its activity is regulated as follows. In its inactive state, the C-terminal tail interacts with the catalytic domain and inhibits the kinase activity. Upon ligand binding, the C-terminal tail is displaced and becomes phosphorylated, thus increasing the kinase activity. Receptor tyrosine kinase that transduces signals from the extracellular matrix into the cytoplasm by binding to hepatocyte growth factor/HGF ligand. Regulates many physiological processes including proliferation, scattering, morphogenesis and survival. Ligand binding at the cell surface induces autophosphorylation of MET on its intracellular domain that provides docking sites for downstream signaling molecules. Following activation by ligand, interacts with the PI3-kinase subunit PIK3R1, PLCG1, SRC, GRB2, STAT3 or the adapter GAB1. Recruitment of these downstream effectors by MET leads to the activation of several signaling cascades including the RAS-ERK, PI3 kinase-AKT, or PLCgamma-PKC. The RAS-ERK activation is associated with the morphogenetic effects while PI3K/AKT coordinates prosurvival effects. During embryonic development, MET signaling plays a role in gastrulation, development and migration of muscles and neuronal precursors, angiogenesis and kidney formation. In adults, participates in wound healing as well as organ regeneration and tissue remodeling. Also promotes differentiation and proliferation of hematopoietic cells. The sequence is that of Hepatocyte growth factor receptor (MET) from Saimiri boliviensis boliviensis (Bolivian squirrel monkey).